Consider the following 464-residue polypeptide: Argininosuccinate lyase (464 aa).

It belongs to the lyase 1 family. Argininosuccinate lyase subfamily.

The protein localises to the cytoplasm. It catalyses the reaction 2-(N(omega)-L-arginino)succinate = fumarate + L-arginine. The protein operates within amino-acid biosynthesis; L-arginine biosynthesis; L-arginine from L-ornithine and carbamoyl phosphate: step 3/3. In Pseudomonas fluorescens (strain ATCC BAA-477 / NRRL B-23932 / Pf-5), this protein is Argininosuccinate lyase.